A 376-amino-acid chain; its full sequence is S-adenosylmethionine synthase (376 aa).

Histidine 15 lines the ATP pocket. Residue aspartate 17 coordinates Mg(2+). Glutamate 43 contributes to the K(+) binding site. L-methionine-binding residues include glutamate 56 and glutamine 92. The interval 92-102 is flexible loop; that stretch reads QSKEIANQVDR. ATP contacts are provided by residues 156–158, aspartate 231, 237–238, alanine 254, and lysine 258; these read DMK and RK. Aspartate 231 provides a ligand contact to L-methionine. Lysine 262 is an L-methionine binding site.

This sequence belongs to the AdoMet synthase family. As to quaternary structure, homotetramer; dimer of dimers. Mg(2+) serves as cofactor. The cofactor is K(+).

The protein resides in the cytoplasm. The enzyme catalyses L-methionine + ATP + H2O = S-adenosyl-L-methionine + phosphate + diphosphate. Its pathway is amino-acid biosynthesis; S-adenosyl-L-methionine biosynthesis; S-adenosyl-L-methionine from L-methionine: step 1/1. Functionally, catalyzes the formation of S-adenosylmethionine (AdoMet) from methionine and ATP. The overall synthetic reaction is composed of two sequential steps, AdoMet formation and the subsequent tripolyphosphate hydrolysis which occurs prior to release of AdoMet from the enzyme. The protein is S-adenosylmethionine synthase of Mycoplasmopsis pulmonis (strain UAB CTIP) (Mycoplasma pulmonis).